Here is a 3678-residue protein sequence, read N- to C-terminus: Dystrophin (3678 aa).

The actin-binding stretch occupies residues 1 to 240 (MLWWEEVEDC…YITSLFQVLP (240 aa)). 2 Calponin-homology (CH) domains span residues 15–119 (DVQK…LHWQ) and 134–240 (TNSE…QVLP). Residues 63-72 (PKEKGSTRVH) are ANK2- and ANK-3 binding. Residues 313–333 (DSTQSPYPSQHLEAPRDKSLD) are disordered. 24 Spectrin repeats span residues 341–449 (VNLD…KLHK), 450–558 (VLMD…VLQD), 561–669 (LKWQ…QISQ), 721–830 (ELRK…WLEY), 832–936 (TNII…ELQT), 945–1047 (RYQE…KLEE), 1050–1156 (NKLR…ALKA), 1159–1265 (DKTV…TLEE), 1268–1369 (ACWH…LLEQ), 1370–1465 (SIQS…LFQK), 1470–1570 (EQRL…QLEK), 1573–1678 (KLSR…LLLE), 1681–1780 (KHME…KASI), 1781–1876 (PLKE…KALE), 1879–1981 (HQWY…TLHE), 1994–2103 (DVSY…RFDR), 2106–2210 (EKWR…RIEE), 2213–2318 (NVLS…ELEV), 2319–2416 (HLKD…LRTK), 2468–2570 (FNRA…QLNE), 2573–2679 (KDST…ALEE), 2682–2795 (RLLQ…HLEA), 2801–2923 (KRLH…RKID), and 2928–3033 (RLQE…QLHE). The interaction with SYNM stretch occupies residues 1417–1915 (SDLTSHEISL…PEPRDERKLK (499 aa)). Residues 3048-3081 (TSVQGPWERAISPNKVPYYINHETQTTCWDHPKM) form the WW domain. The tract at residues 3051-3401 (QGPWERAISP…TVLEGDNMET (351 aa)) is interaction with SYNM. Residues 3301 to 3357 (KHQAKCNICKECPIIGFRYRSLKHFNYDICQSCFFSGRVAKGHKMHYPMVEYCTPTT) form a ZZ-type; degenerate zinc finger. Positions 3306, 3309, 3330, and 3333 each coordinate Zn(2+). The binds to SNTB1 stretch occupies residues 3459 to 3511 (DDEHLLIQHYCQSLNQDSPLSQPRSPAQILISLESEERGELERILADLEEENR). A phosphoserine mark is found at Ser-3476, Ser-3483, and Ser-3493. Disordered stretches follow at residues 3521–3547 (KQQH…QSPR) and 3596–3678 (EAKV…EDTM). 2 stretches are compositionally biased toward polar residues: residues 3600–3619 (NGTT…SSQP) and 3655–3665 (QLNNSFPSSRG). Ser-3605, Ser-3606, Ser-3610, Ser-3616, Ser-3617, and Ser-3659 each carry phosphoserine.

As to quaternary structure, interacts with SYNM. Interacts with the syntrophins SNTG1 and SNTG2. Interacts with KRT19. Component of the dystrophin-associated glycoprotein complex which is composed of three subcomplexes: a cytoplasmic complex comprised of DMD (or UTRN), DTNA and a number of syntrophins, such as SNTB1, SNTB2, SNTG1 and SNTG2, the transmembrane dystroglycan complex, and the sarcoglycan-sarcospan complex. Interacts with DAG1 (betaDAG1) with DMD; the interaction is inhibited by phosphorylation on the PPXY motif of DAG1. Interacts with SYNM; SNTA1 and SNTB1. Interacts with CMYA5. Directly interacts with ANK2 and ANK3; these interactions do not interfere with betaDAG1-binding and are necessary for proper localization in muscle cells. Identified in a dystroglycan complex that contains at least PRX, DRP2, UTRN, DMD and DAG1. Interacts with DTNB. Interacts with PGM5; the interaction is direct. Interacts with NOS1; localizes NOS1 to sarcolemma in muscle cells. Detected in quadriceps muscle and in sciatic nerve (at protein level). Expressed in the sarcolemma of the soleus muscle (at protein level). Differentially expressed during skeletal muscle, heart, and brain development. Also expressed in retina.

Its subcellular location is the cell membrane. It localises to the sarcolemma. The protein localises to the cytoplasm. It is found in the cytoskeleton. The protein resides in the postsynaptic cell membrane. Functionally, anchors the extracellular matrix to the cytoskeleton via F-actin. Ligand for dystroglycan. Component of the dystrophin-associated glycoprotein complex which accumulates at the neuromuscular junction (NMJ) and at a variety of synapses in the peripheral and central nervous systems and has a structural function in stabilizing the sarcolemma. Also implicated in signaling events and synaptic transmission. The protein is Dystrophin (Dmd) of Mus musculus (Mouse).